The chain runs to 114 residues: MANVYDTANQMAADIKTTQEFQDLKKAFDLLKLDTVAYGLFQQFQQKQYEMQQKSMQGQDFTDDEVKSLQELGDKMRDIQPIQNLMAKEQGLSQMMDELNKIISQPIIDVYQGK.

The protein belongs to the UPF0342 family.

This is UPF0342 protein LCABL_19440 from Lacticaseibacillus casei (strain BL23) (Lactobacillus casei).